A 207-amino-acid chain; its full sequence is Histidine biosynthesis bifunctional protein HisIE (207 aa).

Residues 1 to 115 (MLSKKENLLK…FFLKENTLNF (115 aa)) form a phosphoribosyl-AMP cyclohydrolase region. The tract at residues 116–207 (LSKLEDLIED…NLKKRKTEKL (92 aa)) is phosphoribosyl-ATP pyrophosphohydrolase.

This sequence in the N-terminal section; belongs to the PRA-CH family. It in the C-terminal section; belongs to the PRA-PH family.

The protein localises to the cytoplasm. It catalyses the reaction 1-(5-phospho-beta-D-ribosyl)-ATP + H2O = 1-(5-phospho-beta-D-ribosyl)-5'-AMP + diphosphate + H(+). It carries out the reaction 1-(5-phospho-beta-D-ribosyl)-5'-AMP + H2O = 1-(5-phospho-beta-D-ribosyl)-5-[(5-phospho-beta-D-ribosylamino)methylideneamino]imidazole-4-carboxamide. Its pathway is amino-acid biosynthesis; L-histidine biosynthesis; L-histidine from 5-phospho-alpha-D-ribose 1-diphosphate: step 2/9. The protein operates within amino-acid biosynthesis; L-histidine biosynthesis; L-histidine from 5-phospho-alpha-D-ribose 1-diphosphate: step 3/9. This chain is Histidine biosynthesis bifunctional protein HisIE (hisI), found in Buchnera aphidicola subsp. Schizaphis graminum (strain Sg).